The sequence spans 321 residues: Lipoyl synthase (321 aa).

The tract at residues 1–21 is disordered; it reads MRHRWEDRPVAPPPDGRPTEY. The [4Fe-4S] cluster site is built by C63, C68, C74, C89, C93, C96, and S302. One can recognise a Radical SAM core domain in the interval 75–291; sequence WNNRTATFMI…KKLGLEMGFS (217 aa). The disordered stretch occupies residues 301-321; the sequence is SSYHAHEQTEDARRGALGARG. Residues 304-314 are compositionally biased toward basic and acidic residues; that stretch reads HAHEQTEDARR.

Belongs to the radical SAM superfamily. Lipoyl synthase family. Requires [4Fe-4S] cluster as cofactor.

It localises to the cytoplasm. The catalysed reaction is [[Fe-S] cluster scaffold protein carrying a second [4Fe-4S](2+) cluster] + N(6)-octanoyl-L-lysyl-[protein] + 2 oxidized [2Fe-2S]-[ferredoxin] + 2 S-adenosyl-L-methionine + 4 H(+) = [[Fe-S] cluster scaffold protein] + N(6)-[(R)-dihydrolipoyl]-L-lysyl-[protein] + 4 Fe(3+) + 2 hydrogen sulfide + 2 5'-deoxyadenosine + 2 L-methionine + 2 reduced [2Fe-2S]-[ferredoxin]. It functions in the pathway protein modification; protein lipoylation via endogenous pathway; protein N(6)-(lipoyl)lysine from octanoyl-[acyl-carrier-protein]: step 2/2. Functionally, catalyzes the radical-mediated insertion of two sulfur atoms into the C-6 and C-8 positions of the octanoyl moiety bound to the lipoyl domains of lipoate-dependent enzymes, thereby converting the octanoylated domains into lipoylated derivatives. The sequence is that of Lipoyl synthase from Rubrobacter xylanophilus (strain DSM 9941 / JCM 11954 / NBRC 16129 / PRD-1).